The sequence spans 171 residues: uncharacterized protein (171 aa).

This is an uncharacterized protein from Caenorhabditis elegans.